Reading from the N-terminus, the 360-residue chain is Glucan endo-1,3-beta-glucosidase B (360 aa).

Positions 1-25 are cleaved as a signal peptide; sequence MATSQIAIIVLLGLLVATNIHITEA. Gln26 carries the pyrrolidone carboxylic acid modification. Glu120 functions as the Proton donor in the catalytic mechanism. The Nucleophile role is filled by Glu265. A propeptide spans 341-360 (removed in mature form); the sequence is VSERVWDITNSTASSLTSEI. Asn350 carries N-linked (GlcNAc...) asparagine glycosylation.

This sequence belongs to the glycosyl hydrolase 17 family.

The protein resides in the vacuole. It carries out the reaction Hydrolysis of (1-&gt;3)-beta-D-glucosidic linkages in (1-&gt;3)-beta-D-glucans.. Implicated in the defense of plants against pathogens. In Solanum lycopersicum (Tomato), this protein is Glucan endo-1,3-beta-glucosidase B.